The primary structure comprises 77 residues: MSPSHFAILFIIVISLVPLHGYANGQGFDANKLGSSVCHLGKCPKHREEVCYCCFNDRSRCYRSLYKCVAVCNRLVH.

The N-terminal stretch at 1-25 is a signal peptide; that stretch reads MSPSHFAILFIIVISLVPLHGYANG. Cystine bridges form between Cys38–Cys53, Cys43–Cys72, Cys51–Cys68, and Cys54–Cys61.

It belongs to the MEG family.

This is EMBRYO SURROUNDING FACTOR 1-like protein 6 (ESFL6) from Arabidopsis thaliana (Mouse-ear cress).